The primary structure comprises 351 residues: Soluble interferon alpha/beta receptor OPG204 (351 aa).

The signal sequence occupies residues 1 to 23 (MKMKMMVRIYFVSLSLLLFHSYA). 2 consecutive Ig-like C2-type domains span residues 65-137 (LGEP…KNGD) and 155-237 (PKTY…IVVS). Intrachain disulfides connect Cys-73-Cys-129 and Cys-172-Cys-221. Asn-117, Asn-182, Asn-261, Asn-269, and Asn-321 each carry an N-linked (GlcNAc...) asparagine; by host glycan. The 100-residue stretch at 246-345 (PSQDHRFKLI…HNYYFDKTLT (100 aa)) folds into the Ig-like V-type domain. Cys-272 and Cys-333 are joined by a disulfide.

Belongs to the interleukin-1 receptor family. As to quaternary structure, interacts with host IFNA1.

It localises to the secreted. In terms of biological role, counteracts the antiviral effects of host IFN-alpha/beta and key IFN-inducible proteins involved in viral RNA degradation suxh as host OAS1. Acts as a soluble IFN-alpha receptor and thus inhibits the interaction between host IFN-alpha and its receptor. The protein is Soluble interferon alpha/beta receptor OPG204 (OPG204) of Cynomys gunnisoni (Gunnison's prairie dog).